The chain runs to 252 residues: Methylthioribulose-1-phosphate dehydratase (252 aa).

Position 105 (cysteine 105) interacts with substrate. Histidine 123 and histidine 125 together coordinate Zn(2+). The Proton donor/acceptor role is filled by glutamate 151. Histidine 208 is a binding site for Zn(2+).

This sequence belongs to the aldolase class II family. MtnB subfamily. The cofactor is Zn(2+).

The protein localises to the cytoplasm. The enzyme catalyses 5-(methylsulfanyl)-D-ribulose 1-phosphate = 5-methylsulfanyl-2,3-dioxopentyl phosphate + H2O. Its pathway is amino-acid biosynthesis; L-methionine biosynthesis via salvage pathway; L-methionine from S-methyl-5-thio-alpha-D-ribose 1-phosphate: step 2/6. Functionally, catalyzes the dehydration of methylthioribulose-1-phosphate (MTRu-1-P) into 2,3-diketo-5-methylthiopentyl-1-phosphate (DK-MTP-1-P). The protein is Methylthioribulose-1-phosphate dehydratase of Sclerotinia sclerotiorum (strain ATCC 18683 / 1980 / Ss-1) (White mold).